A 564-amino-acid chain; its full sequence is Plant UBX domain-containing protein 8 (564 aa).

Ala2 is subject to N-acetylalanine. Residues 2–44 (ATPNQEAIDTFISITGASDAVALQKLEEHRGDLNQAVNAYFSE) form the UBA-like domain. UIM domains are found at residues 198–217 (IEEE…AEGS) and 230–249 (EDDD…AEEE). The disordered stretch occupies residues 210-229 (SKKEAEGSSNPLLEERPLHM). Disordered regions lie at residues 267 to 358 (AVTA…EEHD), 371 to 423 (IPET…DKEM), and 443 to 483 (FLEE…QADE). Acidic residues predominate over residues 291–300 (FDDDSDDVDE). A phosphoserine mark is found at Ser295, Ser324, Ser326, and Ser328. Over residues 322 to 334 (DRSRSGSPEEEHA) the composition is skewed to basic and acidic residues. Over residues 381-395 (FLPPQPRAQPRPPSP) the composition is skewed to pro residues. The stretch at 412-478 (VASLQADRDK…DAKEASLPKE (67 aa)) forms a coiled coil. Residues 443–475 (FLEEEKKKEEEAQRKLEEEQELERQLDAKEASL) are compositionally biased toward basic and acidic residues. The UBX domain maps to 482–560 (DEENAITLLI…GLTSKQEALF (79 aa)).

As to quaternary structure, interacts with RABA5C/ARA-4.

In Arabidopsis thaliana (Mouse-ear cress), this protein is Plant UBX domain-containing protein 8.